Here is a 258-residue protein sequence, read N- to C-terminus: 5'-nucleotidase SurE (258 aa).

Asp18, Asp19, Ser49, and Asn102 together coordinate a divalent metal cation.

The protein belongs to the SurE nucleotidase family. A divalent metal cation serves as cofactor.

Its subcellular location is the cytoplasm. It carries out the reaction a ribonucleoside 5'-phosphate + H2O = a ribonucleoside + phosphate. Its function is as follows. Nucleotidase that shows phosphatase activity on nucleoside 5'-monophosphates. The protein is 5'-nucleotidase SurE of Vibrio parahaemolyticus serotype O3:K6 (strain RIMD 2210633).